The following is a 647-amino-acid chain: DNA mismatch repair protein MutL (647 aa).

The disordered stretch occupies residues glutamine 346–proline 378.

Belongs to the DNA mismatch repair MutL/HexB family.

In terms of biological role, this protein is involved in the repair of mismatches in DNA. It is required for dam-dependent methyl-directed DNA mismatch repair. May act as a 'molecular matchmaker', a protein that promotes the formation of a stable complex between two or more DNA-binding proteins in an ATP-dependent manner without itself being part of a final effector complex. The chain is DNA mismatch repair protein MutL from Limosilactobacillus fermentum (strain NBRC 3956 / LMG 18251) (Lactobacillus fermentum).